The following is a 373-amino-acid chain: Hydrogenase maturation factor HypD (373 aa).

Positions 41, 69, and 72 each coordinate Fe cation.

It belongs to the HypD family. Monomer. Interacts with HypC. Forms a complex with HypC, or HybG, and HypE. It depends on [4Fe-4S] cluster as a cofactor.

It participates in protein modification; [NiFe] hydrogenase maturation. In terms of biological role, involved in the maturation of [NiFe] hydrogenases. Involved in the biosynthesis of the Fe(CN)(2)CO cofactor. HypD may act as a scaffold on which the Fe(CN)(2)CO cofactor is formed. In complex with HypC, accepts the cyanide ligand generated by HypF and HypE, and also coordinates the carbon monoxide ligand. Required for the formation of all three hydrogenase isoenzymes. This Escherichia coli (strain K12) protein is Hydrogenase maturation factor HypD.